The chain runs to 853 residues: Cytochrome P450 monooxygenase mpaDE (853 aa).

At 1–6 the chain is on the lumenal side; the sequence is MKSLSL. A helical transmembrane segment spans residues 7 to 29; it reads TWITAVAVVLYLVQRYVRSYWRL. Over 30-853 the chain is Cytoplasmic; sequence KDIPGPVLAK…DIENSIEGQK (824 aa). Cysteine 449 serves as a coordination point for heme.

The protein belongs to the cytochrome P450 family. The cofactor is heme.

The protein resides in the endoplasmic reticulum membrane. The catalysed reaction is 5-methylorsellinate + reduced [NADPH--hemoprotein reductase] + O2 = 4,6-dihydroxy-2-(hydroxymethyl)-3-methylbenzoate + oxidized [NADPH--hemoprotein reductase] + H2O + H(+). The enzyme catalyses 4,6-dihydroxy-2-(hydroxymethyl)-3-methylbenzoate + H(+) = 5,7-dihydroxy-4-methylphthalide + H2O. It participates in secondary metabolite biosynthesis; terpenoid biosynthesis. Its function is as follows. Cytochrome P450 monooxygenase; part of the gene cluster that mediates the biosynthesis of mycophenolic acid (MPA), the first isolated antibiotic natural product in the world obtained from a culture of Penicillium brevicompactum in 1893. MpaDE is an endoplasmic reticulum-bound enzyme that catalyzes the conversion of 5-methylorsellinic acid (5MOA) into the phthalide compound 5,7-dihydroxy-4,6-dimethylphthalide (DHMP). MpaDE first catalyzes hydroxylation of 5-MOA to 4,6-dihydroxy-2-(hydroxymethyl)-3-methylbenzoic acid (DHMB), and then acts as a lactone synthase that catalyzes the ring closure to convert DHMB into DHMP. The first step of the pathway is the synthesis of 5-methylorsellinic acid (5MOA) by the cytosolic polyketide synthase mpaC. 5MOA is then converted to the phthalide compound 5,7-dihydroxy-4,6-dimethylphthalide (DHMP) by the endoplasmic reticulum-bound cytochrome P450 monooxygenase mpaDE. MpaDE first catalyzes hydroxylation of 5-MOA to 4,6-dihydroxy-2-(hydroxymethyl)-3-methylbenzoic acid (DHMB). MpaDE then acts as a lactone synthase that catalyzes the ring closure to convert DHMB into DHMP. The next step is the prenylation of DHMP by the Golgi apparatus-associated prenyltransferase mpaA to yield farnesyl-DHMP (FDHMP). The ER-bound oxygenase mpaB then mediates the oxidative cleavage the C19-C20 double bond in FDHMP to yield FDHMP-3C via a mycophenolic aldehyde intermediate. The O-methyltransferase mpaG catalyzes the methylation of FDHMP-3C to yield MFDHMP-3C. After the cytosolic methylation of FDHMP-3C, MFDHMP-3C enters into peroxisomes probably via free diffusion due to its low molecular weight. Upon a peroxisomal CoA ligation reaction, catalyzed by a beta-oxidation component enzyme acyl-CoA ligase ACL891, MFDHMP-3C-CoA would then be restricted to peroxisomes for the following beta-oxidation pathway steps. The peroxisomal beta-oxidation machinery than converts MFDHMP-3C-CoA into MPA_CoA, via a beta-oxidation chain-shortening process. Finally mpaH acts as a peroxisomal acyl-CoA hydrolase with high substrate specificity toward MPA-CoA to release the final product MPA. The chain is Cytochrome P450 monooxygenase mpaDE from Penicillium brevicompactum.